The primary structure comprises 392 residues: Multidrug resistance protein MdtL (392 aa).

The next 12 helical transmembrane spans lie at 4–24, 38–58, 70–90, 95–115, 131–151, 158–178, 209–229, 246–266, 270–290, 294–314, 331–351, and 357–377; these read FLLC…MYLV, AQLH…MLFA, VAIV…QAHA, LVGR…AFAI, LLNG…HLIM, SLFY…VFIL, ILIT…SPVL, ALMA…LSLF, TLML…SLAT, LTLI…GVAM, VLGI…AIIG, and MLIG…LVVT.

This sequence belongs to the major facilitator superfamily. DHA1 family. MdtL (TC 2.A.1.2.22) subfamily.

It localises to the cell inner membrane. In Klebsiella pneumoniae (strain 342), this protein is Multidrug resistance protein MdtL.